We begin with the raw amino-acid sequence, 362 residues long: Manganese peroxidase 3 (362 aa).

A signal peptide spans 1-18 (MAFKQLLTAISIVSVANA). The propeptide occupies 19–23 (ALTRR). 4 disulfide bridges follow: Cys26-Cys39, Cys38-Cys309, Cys58-Cys144, and Cys273-Cys338. Mn(2+) is bound by residues Glu60 and Glu64. His71 (proton acceptor) is an active-site residue. Ca(2+) contacts are provided by Asp72, Gly90, Asp92, and Ser94. N-linked (GlcNAc...) asparagine glycosylation is present at Asn126. His200 lines the heme b pocket. A Ca(2+)-binding site is contributed by Thr201. Asp206 provides a ligand contact to Mn(2+). Ca(2+) contacts are provided by Asp218, Thr220, Ile223, and Asp225. Residues 341 to 362 (TPFPSLSADPGPATSVAPVPPS) are disordered.

It belongs to the peroxidase family. Ligninase subfamily. Heme b serves as cofactor. Requires Ca(2+) as cofactor.

Its subcellular location is the secreted. The catalysed reaction is 2 Mn(2+) + H2O2 + 2 H(+) = 2 Mn(3+) + 2 H2O. Functionally, catalyzes the oxidation of Mn(2+) to Mn(3+). The latter, acting as a diffusible redox mediator, is capable of oxidizing a variety of lignin compounds. This isozyme is also able to oxidize phenols and amines in the absence of Mn(2+), similar to versatile peroxidases. The chain is Manganese peroxidase 3 (mnp3) from Phlebia radiata (White-rot fungus).